Reading from the N-terminus, the 432-residue chain is Adenylosuccinate synthetase (432 aa).

Residues G13–K19 and G41–T43 contribute to the GTP site. D14 (proton acceptor) is an active-site residue. The Mg(2+) site is built by D14 and G41. IMP is bound by residues D14–K17, N39–H42, T130, R144, Q225, T240, and R304. The active-site Proton donor is H42. Substrate is bound at residue A300–R306. Residues R306, K332 to D334, and S415 to G417 contribute to the GTP site.

Belongs to the adenylosuccinate synthetase family. Homodimer. Mg(2+) is required as a cofactor.

Its subcellular location is the cytoplasm. It catalyses the reaction IMP + L-aspartate + GTP = N(6)-(1,2-dicarboxyethyl)-AMP + GDP + phosphate + 2 H(+). The protein operates within purine metabolism; AMP biosynthesis via de novo pathway; AMP from IMP: step 1/2. Plays an important role in the de novo pathway of purine nucleotide biosynthesis. Catalyzes the first committed step in the biosynthesis of AMP from IMP. In Actinobacillus succinogenes (strain ATCC 55618 / DSM 22257 / CCUG 43843 / 130Z), this protein is Adenylosuccinate synthetase.